The primary structure comprises 186 residues: Protein C (186 aa).

The segment covering 1-15 (MSKTDWNASGLSRPS) has biased composition (polar residues). The tract at residues 1–44 (MSKTDWNASGLSRPSPSAHWPSRKLWQHGQKYQTTQDRSEPPAG) is disordered.

It belongs to the morbillivirus protein C family. Interacts with the phosphoprotein (via C-terminus); this interaction allows C to associate with the ribonucleocapsid.

It localises to the host nucleus. The protein resides in the host cytoplasmic vesicle. Its function is as follows. Ribonucleocapsid-associated protein that interacts with the phosphoprotein (P), thereby increasing replication accuracy and processivity of the polymerase complex. The polypeptide is Protein C (P/V/C) (Homo sapiens (Human)).